A 165-amino-acid chain; its full sequence is UPF0178 protein Bphyt_5655 (165 aa).

Disordered regions lie at residues 115–134 (LRGS…RDSK) and 139–165 (ELDR…PPTE).

Belongs to the UPF0178 family.

The chain is UPF0178 protein Bphyt_5655 from Paraburkholderia phytofirmans (strain DSM 17436 / LMG 22146 / PsJN) (Burkholderia phytofirmans).